The primary structure comprises 160 residues: Flavodoxin (160 aa).

In terms of domain architecture, Flavodoxin-like spans 3 to 153 (ISILYSSKTG…NARIFGERIA (151 aa)).

This sequence belongs to the flavodoxin family. The cofactor is FMN.

Low-potential electron donor to a number of redox enzymes. This chain is Flavodoxin (floX), found in Clostridium saccharobutylicum.